The primary structure comprises 156 residues: Small ribosomal subunit protein uS7 (156 aa).

Belongs to the universal ribosomal protein uS7 family. Part of the 30S ribosomal subunit. Contacts proteins S9 and S11.

In terms of biological role, one of the primary rRNA binding proteins, it binds directly to 16S rRNA where it nucleates assembly of the head domain of the 30S subunit. Is located at the subunit interface close to the decoding center, probably blocks exit of the E-site tRNA. This is Small ribosomal subunit protein uS7 from Methylococcus capsulatus (strain ATCC 33009 / NCIMB 11132 / Bath).